The sequence spans 157 residues: Protein Smg homolog (157 aa).

It belongs to the Smg family.

In Aliivibrio fischeri (strain MJ11) (Vibrio fischeri), this protein is Protein Smg homolog.